The sequence spans 758 residues: Deoxynucleotidyltransferase terminal-interacting protein 2 (758 aa).

Polar residues predominate over residues 1–21 (MVVTRSGLSRTRLQESSQQKR). The disordered stretch occupies residues 1-176 (MVVTRSGLSR…SQSGTVSDAE (176 aa)). S17, S133, S137, and S140 each carry phosphoserine. The span at 128–143 (DEVVVSEAESHVSGVS) shows a compositional bias: low complexity. The span at 155–172 (NKANSQRDSSQESQSGTV) shows a compositional bias: polar residues. Phosphoserine is present on residues S173 and S183. K210 is covalently cross-linked (Glycyl lysine isopeptide (Lys-Gly) (interchain with G-Cter in SUMO2)). A phosphoserine mark is found at S229, S240, S248, and S255. Residues 231-255 (ATQLSARPLSQRNMPNVSDSETYNS) are compositionally biased toward polar residues. Disordered regions lie at residues 231–277 (ATQL…HQNL), 312–353 (KVIN…QLSS), 377–480 (DKRG…AEDL), and 501–552 (DKNF…DLLS). A Glycyl lysine isopeptide (Lys-Gly) (interchain with G-Cter in SUMO2) cross-link involves residue K317. A compositionally biased stretch (polar residues) spans 321 to 353 (RSLSEAQDTSLQQSVSQNHSSTPNKKPTFQLSS). Residues S324 and S330 each carry the phosphoserine modification. Glycyl lysine isopeptide (Lys-Gly) (interchain with G-Cter in SUMO2) cross-links involve residues K345 and K384. The span at 377-387 (DKRGGSGKKSD) shows a compositional bias: basic and acidic residues. Over residues 431–440 (LSMTQDTTDS) the composition is skewed to polar residues. Residues 447–456 (SSDESQQSDS) are compositionally biased toward low complexity. S476 and S512 each carry phosphoserine. Residues 512-541 (SEVAIEEEKEEEEKEEENSEEDSSDSDENK) adopt a coiled-coil conformation. A compositionally biased stretch (acidic residues) spans 515-550 (AIEEEKEEEEKEEENSEEDSSDSDENKDESSDEEDL). Residues 550 to 607 (LLSNTKSKLLKLTSSSIDPGLNIKQLGGLYINFNVDKLQPHKETLTQIKEKKKNELLQ) form a tdBR region; mediates interaction with DNTT region. Residues K560, K586, and K608 each participate in a glycyl lysine isopeptide (Lys-Gly) (interchain with G-Cter in SUMO2) cross-link. At T612 the chain carries Phosphothreonine. Residues 621 to 647 (VPPYSESKHRLQKQRRKERQKTAGNGW) are disordered. Residue K628 forms a Glycyl lysine isopeptide (Lys-Gly) (interchain with G-Cter in SUMO2) linkage. The span at 630-639 (RLQKQRRKER) shows a compositional bias: basic residues. Glycyl lysine isopeptide (Lys-Gly) (interchain with G-Cter in SUMO2) cross-links involve residues K651, K660, K688, and K733.

Forms a ternary complex with DNTT and core histone; interaction with PCNA releases DNTT and H2A/H2B histones from this ternary complex. Interacts with ESR1, ESR2, PPARG and RXRA. Part of the small subunit (SSU) processome, composed of more than 70 proteins and the RNA chaperone small nucleolar RNA (snoRNA) U3.

The protein localises to the nucleus. The protein resides in the nucleolus. Its function is as follows. Regulates the transcriptional activity of DNTT and ESR1. May function as a chromatin remodeling protein. Part of the small subunit (SSU) processome, first precursor of the small eukaryotic ribosomal subunit. During the assembly of the SSU processome in the nucleolus, many ribosome biogenesis factors, an RNA chaperone and ribosomal proteins associate with the nascent pre-rRNA and work in concert to generate RNA folding, modifications, rearrangements and cleavage as well as targeted degradation of pre-ribosomal RNA by the RNA exosome. The protein is Deoxynucleotidyltransferase terminal-interacting protein 2 (Dnttip2) of Mus musculus (Mouse).